Reading from the N-terminus, the 215-residue chain is Ras-related protein Rab-5A (215 aa).

Positions 29, 30, 32, 33, 34, 35, 46, 47, 52, and 78 each coordinate GTP. Serine 34 is a Mg(2+) binding site. 2 consecutive short sequence motifs (switch) follow at residues 44–56 (QFHE…IGAA) and 77–93 (AGQE…YRGA). Residue threonine 52 participates in Mg(2+) binding. Residue serine 84 is modified to Phosphoserine. GTP-binding residues include asparagine 133, lysine 134, aspartate 136, alanine 164, and lysine 165. A disordered region spans residues 185–215 (EPQNPGINCTRGRGVDLTEPTQPTRSQCCSN). A compositionally biased stretch (polar residues) spans 203 to 215 (EPTQPTRSQCCSN). 2 S-geranylgeranyl cysteine lipidation sites follow: cysteine 212 and cysteine 213.

The protein belongs to the small GTPase superfamily. Rab family. As to quaternary structure, interacts with GDI1; this promotes dissociation from membranes; phosphorylation at Ser-84 disrupts this interaction. Interacts with GDI2; phosphorylation at Ser-84 disrupts the interaction. Interacts with SGSM1 and SGSM3. Interacts with PIK3CB. Interacts with RIN1 and GAPVD1, which regulate its pathway, probably by acting as a GEF. Interacts with RINL. Interacts with ALS2CL, SUN2, ZFYVE20 and RUFY1. Interacts with RABEP1; one RABEP1 homodimer binds two RAB5A chains, but at opposite sides of the dimer. Interacts with OCRL and INPP5F. May be a component of a complex composed of RAB5A, DYN2 and PIK3C3. Does not interact with the BLOC-3 complex (heterodimer of HPS1 and HPS4). Interacts with CLN5. Interacts with APPL2. Interacts with F8A1/F8A2/F8A3. Found in a complex with F8A1/F8A2/F8A3, HTT and RAB5A; mediates the recruitment of HTT by RAB5A onto early endosomes. Interacts with ATP9A. Interacts with PPP1R21; mediates the recruitment of FERRY complex by RAB5A onto early endosomes. The cofactor is Mg(2+). Post-translationally, phosphorylation of Ser-84 in the switch II region by LRRK2 prevents the association of RAB regulatory proteins, including RAB GDP dissociation inhibitors GDI1 and GDI2.

It is found in the cell membrane. Its subcellular location is the early endosome membrane. The protein resides in the melanosome. It localises to the cytoplasmic vesicle. The protein localises to the cell projection. It is found in the ruffle. Its subcellular location is the membrane. The protein resides in the cytoplasm. It localises to the cytosol. The protein localises to the phagosome membrane. It is found in the endosome membrane. It catalyses the reaction GTP + H2O = GDP + phosphate + H(+). With respect to regulation, regulated by guanine nucleotide exchange factors (GEFs) including RINL, which promote the exchange of bound GDP for free GTP. Regulated by GTPase activating proteins (GAPs) which increase the GTP hydrolysis activity. Inhibited by GDP dissociation inhibitors (GDIs). Its function is as follows. The small GTPases Rab are key regulators of intracellular membrane trafficking, from the formation of transport vesicles to their fusion with membranes. Rabs cycle between an inactive GDP-bound form and an active GTP-bound form that is able to recruit to membranes different sets of downstream effectors directly responsible for vesicle formation, movement, tethering and fusion. RAB5A is required for the fusion of plasma membranes and early endosomes. Contributes to the regulation of filopodia extension. Required for the exosomal release of SDCBP, CD63, PDCD6IP and syndecan. Regulates maturation of apoptotic cell-containing phagosomes, probably downstream of DYN2 and PIK3C3. This Sus scrofa (Pig) protein is Ras-related protein Rab-5A (RAB5A).